A 513-amino-acid polypeptide reads, in one-letter code: Sugar transport protein MST8 (513 aa).

The Cytoplasmic segment spans residues 1–17 (MAGGAMTDTDGAHKNYP). A helical membrane pass occupies residues 18 to 38 (GKMTIFVFLACLVASSGGLIF). Residues 39–81 (GYDIGISGGVTSMDSFLIKFFPSVYAKEKEMVETNQYCKFDSE) lie on the Extracellular side of the membrane. Residues 82–102 (LLTLFTSSLYLAALIASLFAS) form a helical membrane-spanning segment. The Cytoplasmic segment spans residues 103–116 (VITRKFGRRITMLG). Residues 117 to 137 (GGVIFLVGAILNGAAADVAML) form a helical membrane-spanning segment. The Extracellular segment spans residues 138–139 (II). A helical transmembrane segment spans residues 140–160 (GRILLGIGVGFSNQAVPLYLS). The Cytoplasmic portion of the chain corresponds to 161 to 166 (EMAPAR). Residues 167–187 (MRGMLNISFQLMITVGILAAN) form a helical membrane-spanning segment. The Extracellular portion of the chain corresponds to 188–201 (LINYFTDKIAGGWG). Residues 202 to 222 (WRVSLGLAAVPAVIMAGGSLF) traverse the membrane as a helical segment. Over 223–294 (LPDTPNSLLS…LVMSVLIPTL (72 aa)) the chain is Cytoplasmic. Residues 295–315 (QQLTGINVVMFYAPVLFKTIG) traverse the membrane as a helical segment. Over 316–320 (FGGTA) the chain is Extracellular. A helical transmembrane segment spans residues 321–341 (SLMSAVITGLVNMFATFVSIA). The Cytoplasmic segment spans residues 342–347 (TVDRLG). Residues 348 to 368 (RRKLLLQGGVQMIFAQFILGT) traverse the membrane as a helical segment. At 369 to 385 (LIAVKFGTAGVANISRG) the chain is on the extracellular side. The chain crosses the membrane as a helical span at residues 386–406 (YAIVVVLCICVFVSAFAWSWG). The Cytoplasmic portion of the chain corresponds to 407-425 (PLGWLVPSEIFPLEIRSAA). The chain crosses the membrane as a helical span at residues 426 to 446 (QSVVVVFNMAFTFIIAQIFLM). Residues 447–450 (MLCH) are Extracellular-facing. A helical transmembrane segment spans residues 451-471 (LKFGLFYFFGAMELIMTGFVF). The Cytoplasmic portion of the chain corresponds to 472–512 (FFLPETKGIPIEEMDRIWGKHWYWRRFVGAGAGGKVEITST).

It belongs to the major facilitator superfamily. Sugar transporter (TC 2.A.1.1) family. Expressed specifically in anthers.

It is found in the membrane. Mediates active uptake of hexoses by sugar:proton symport. May play an important role in transporting monosaccharides during anther development. This chain is Sugar transport protein MST8, found in Oryza sativa subsp. japonica (Rice).